We begin with the raw amino-acid sequence, 488 residues long: Regulatory protein ViaA (488 aa).

The protein belongs to the ViaA family. Homodimer. Interacts with RavA.

It is found in the cytoplasm. Its function is as follows. Component of the RavA-ViaA chaperone complex, which may act on the membrane to optimize the function of some of the respiratory chains. ViaA stimulates the ATPase activity of RavA. In Yersinia pseudotuberculosis serotype O:1b (strain IP 31758), this protein is Regulatory protein ViaA.